Consider the following 200-residue polypeptide: GTP cyclohydrolase-2 (200 aa).

50–54 is a binding site for GTP; it reads RVHSE. The Zn(2+) site is built by cysteine 55, cysteine 66, and cysteine 68. Residues glutamine 71, 93–95, and threonine 115 each bind GTP; that span reads EGR. Residue aspartate 127 is the Proton acceptor of the active site. Arginine 129 serves as the catalytic Nucleophile. The GTP site is built by threonine 150 and lysine 155.

It belongs to the GTP cyclohydrolase II family. It depends on Zn(2+) as a cofactor.

The enzyme catalyses GTP + 4 H2O = 2,5-diamino-6-hydroxy-4-(5-phosphoribosylamino)-pyrimidine + formate + 2 phosphate + 3 H(+). The protein operates within cofactor biosynthesis; riboflavin biosynthesis; 5-amino-6-(D-ribitylamino)uracil from GTP: step 1/4. Functionally, catalyzes the conversion of GTP to 2,5-diamino-6-ribosylamino-4(3H)-pyrimidinone 5'-phosphate (DARP), formate and pyrophosphate. This chain is GTP cyclohydrolase-2, found in Acinetobacter baumannii (strain AB307-0294).